Consider the following 301-residue polypeptide: Light-independent protochlorophyllide reductase iron-sulfur ATP-binding protein (301 aa).

A disordered region spans residues 1–26; the sequence is MSNGSVPVSGIGGRGDGEGSSQVHME. ATP-binding positions include 44 to 49 and lysine 73; that span reads GIGKST. Position 48 (serine 48) interacts with Mg(2+). [4Fe-4S] cluster-binding residues include cysteine 129 and cysteine 163. 214–215 serves as a coordination point for ATP; that stretch reads NR.

Belongs to the NifH/BchL/ChlL family. Homodimer. Protochlorophyllide reductase is composed of three subunits; BchL, BchN and BchB. [4Fe-4S] cluster serves as cofactor.

The enzyme catalyses chlorophyllide a + oxidized 2[4Fe-4S]-[ferredoxin] + 2 ADP + 2 phosphate = protochlorophyllide a + reduced 2[4Fe-4S]-[ferredoxin] + 2 ATP + 2 H2O. It functions in the pathway porphyrin-containing compound metabolism; bacteriochlorophyll biosynthesis (light-independent). Functionally, component of the dark-operative protochlorophyllide reductase (DPOR) that uses Mg-ATP and reduced ferredoxin to reduce ring D of protochlorophyllide (Pchlide) to form chlorophyllide a (Chlide). This reaction is light-independent. The L component serves as a unique electron donor to the NB-component of the complex, and binds Mg-ATP. The polypeptide is Light-independent protochlorophyllide reductase iron-sulfur ATP-binding protein (Halorhodospira halophila (strain DSM 244 / SL1) (Ectothiorhodospira halophila (strain DSM 244 / SL1))).